The sequence spans 755 residues: Ligand-dependent nuclear receptor-interacting factor 1 (755 aa).

A Glycyl lysine isopeptide (Lys-Gly) (interchain with G-Cter in SUMO2) cross-link involves residue Lys-270. Ser-391, Ser-419, and Ser-425 each carry phosphoserine. Lys-436 participates in a covalent cross-link: Glycyl lysine isopeptide (Lys-Gly) (interchain with G-Cter in SUMO2). A PxVxL motif motif is present at residues 565 to 569; the sequence is LRVCL. A Phosphoserine modification is found at Ser-584. Lys-590 is covalently cross-linked (Glycyl lysine isopeptide (Lys-Gly) (interchain with G-Cter in SUMO2)). 2 short sequence motifs (nuclear localization signal) span residues 612 to 615 and 625 to 628; these read KKRK and KKIK. The segment at 665-698 is disordered; that stretch reads IVTSHSTTREDKRTEAEHCSHEKQEKGTLSSSTS. Positions 671-690 are enriched in basic and acidic residues; sequence TTREDKRTEAEHCSHEKQEK. Positions 678 to 711 form a coiled coil; it reads TEAEHCSHEKQEKGTLSSSTSFEQSTFLNKNFME. A Glycyl lysine isopeptide (Lys-Gly) (interchain with G-Cter in SUMO2) cross-link involves residue Lys-687. Thr-717 carries the phosphothreonine modification.

It belongs to the LRIF1 family. Interacts with RARA. Interacts with SMCHD1; leading to recruitment to inactivated chromosome X in females. Interacts (via PxVxL motif) with HP1 (CBX1/HP1-beta, CBX3/HP1-gamma and CBX5/HP1-alpha).

The protein resides in the chromosome. Its subcellular location is the nucleus matrix. Its function is as follows. Together with SMCHD1, involved in chromosome X inactivation in females by promoting the compaction of heterochromatin. Also able to repress the ligand-induced transcriptional activity of retinoic acid receptor alpha (RARA), possibly through direct recruitment of histone deacetylases. In Mus musculus (Mouse), this protein is Ligand-dependent nuclear receptor-interacting factor 1 (Lrif1).